Reading from the N-terminus, the 182-residue chain is Carbonic anhydrase (182 aa).

3 residues coordinate Mg(2+): His64, His81, and His86.

The protein belongs to the gamma-class carbonic anhydrase family. Homotrimer. Mg(2+) serves as cofactor. Requires Zn(2+) as cofactor.

The catalysed reaction is hydrogencarbonate + H(+) = CO2 + H2O. Reversible hydration of carbon dioxide. In Geobacillus kaustophilus (strain HTA426), this protein is Carbonic anhydrase.